Consider the following 103-residue polypeptide: MKNPLLRPWLTEKSTGLTEQKGQYVFQVKLDADKIDIRMAVEEKFGVEVKSVRTVNCLGKSRRQYTRKGLIAGKKNDWKKAIVTLREGQSIDYYSGAAPKGEG.

Belongs to the universal ribosomal protein uL23 family. Part of the 50S ribosomal subunit. Contacts protein L29, and trigger factor when it is bound to the ribosome.

Its function is as follows. One of the early assembly proteins it binds 23S rRNA. One of the proteins that surrounds the polypeptide exit tunnel on the outside of the ribosome. Forms the main docking site for trigger factor binding to the ribosome. The polypeptide is Large ribosomal subunit protein uL23 (Chlorobium luteolum (strain DSM 273 / BCRC 81028 / 2530) (Pelodictyon luteolum)).